A 743-amino-acid chain; its full sequence is NAD(P)H-quinone oxidoreductase subunit 5, chloroplastic (743 aa).

Helical transmembrane passes span 9–29, 40–60, 89–109, 125–145, 147–167, 185–205, 219–239, 258–278, 283–303, 327–347, 354–374, 396–416, 425–445, 548–568, 607–627, and 723–743; these read WIIP…LLLF, WAFQ…NLSI, IDPL…LVLI, FAYM…SNLI, IYIF…FWFT, GDFG…SFEF, NEVN…GAIA, TPIS…FLVA, LFIV…ITVF, LGYM…FHLI, ALLF…VGYC, ISFL…CFWS, WLYS…TAFY, LFPI…GIPF, VFSV…YKPV, and YLFF…FFNL.

The protein belongs to the complex I subunit 5 family. NDH is composed of at least 16 different subunits, 5 of which are encoded in the nucleus.

It localises to the plastid. The protein resides in the chloroplast thylakoid membrane. It catalyses the reaction a plastoquinone + NADH + (n+1) H(+)(in) = a plastoquinol + NAD(+) + n H(+)(out). The enzyme catalyses a plastoquinone + NADPH + (n+1) H(+)(in) = a plastoquinol + NADP(+) + n H(+)(out). In terms of biological role, NDH shuttles electrons from NAD(P)H:plastoquinone, via FMN and iron-sulfur (Fe-S) centers, to quinones in the photosynthetic chain and possibly in a chloroplast respiratory chain. The immediate electron acceptor for the enzyme in this species is believed to be plastoquinone. Couples the redox reaction to proton translocation, and thus conserves the redox energy in a proton gradient. In Carthamus tinctorius (Safflower), this protein is NAD(P)H-quinone oxidoreductase subunit 5, chloroplastic (ndhF).